Reading from the N-terminus, the 3838-residue chain is Replicase polyprotein 1ab (3838 aa).

The C4-type; atypical zinc-finger motif lies at 8–28 (CMCTPAARVFWNAGQVFCTRC). A Peptidase C31 domain is found at 69 to 180 (ECTPSGCCWL…QPFCPFEEAH (112 aa)). The interval 69 to 182 (ECTPSGCCWL…FCPFEEAHSD (114 aa)) is PCP1-alpha. Catalysis depends on for Nsp1-alpha papain-like cysteine proteinase activity residues cysteine 76 and histidine 146. The segment at 203-204 (MM) is important for host EIF2AK2 inhibition. The interval 269–384 (PNVFDGKCWL…IFRFGAHKWY (116 aa)) is PCP1-beta. The Peptidase C32 domain occupies 269–385 (PNVFDGKCWL…FRFGAHKWYG (117 aa)). Active-site for Nsp1-beta papain-like cysteine proteinase activity residues include cysteine 276 and histidine 345. The OTU-like stretch occupies residues 418 to 505 (ITTYSPPTDG…GVHWEVEVRS (88 aa)). One can recognise a Peptidase C33 domain in the interval 420–527 (TYSPPTDGSC…VGVCSEGCVA (108 aa)). Active-site for Nsp2 cysteine proteinase activity residues include cysteine 429 and histidine 498. Disordered regions lie at residues 728-758 (AIGS…SHPA) and 1027-1064 (SVTP…SHAS). Basic and acidic residues predominate over residues 737–749 (DSKRENMHNSRED). Helical transmembrane passes span 1094 to 1114 (LMTW…TLFS), 1117 to 1137 (GSMA…LLLC), 1162 to 1182 (GVFG…SNPV), 1211 to 1231 (GLVV…LGGS), and 1235 to 1255 (WHVI…VYVV). The segment at 1132-1255 (LALLLCRSYP…DLALSLVYVV (124 aa)) is HD1. The WCCH stretch occupies residues 1310 to 1334 (TGWRGCWRGESPIHQPHQKPIAYAN). Transmembrane regions (helical) follow at residues 1450 to 1470 (TLAV…GLWF), 1526 to 1546 (EVGI…RLAL), 1556 to 1576 (AFCA…PILL), and 1592 to 1612 (FLVF…GLLW). Residues 1451–1612 (LAVAQVSVWT…LSLGITGLLW (162 aa)) are HD2. The Peptidase S32 domain maps to 1677 to 1879 (GAFRTHKPCL…SLLASVPVME (203 aa)). Active-site charge relay system; for 3C-like serine proteinase activity residues include histidine 1715, aspartate 1740, and serine 1793. Transmembrane regions (helical) follow at residues 1875–1895 (VPVM…FLLW), 1916–1936 (ILPA…LAWA), 1960–1980 (LAFY…AFAG), 2003–2023 (SYVP…LWLF), and 2029–2048 (HNML…RYFA). The interval 1902-2023 (WTPIVAVGFF…HALGVILWLF (122 aa)) is HD3. The 164-residue stretch at 2364-2527 (IISQLQGLTT…LPYKLYPVRG (164 aa)) folds into the NiRAN domain. Residues 2765–2899 (AGRCLEADLA…LYAERPTFPN (135 aa)) enclose the RdRp catalytic domain. The AV ZBD domain occupies 3021–3084 (GKKFRHCGIC…SPVGAGRSPL (64 aa)). Zn(2+)-binding residues include cysteine 3027, cysteine 3030, cysteine 3040, cysteine 3045, histidine 3048, histidine 3050, histidine 3052, histidine 3054, cysteine 3061, histidine 3063, cysteine 3070, and cysteine 3073. One can recognise a (+)RNA virus helicase ATP-binding domain in the interval 3134-3293 (DLPDGDYQVV…VFDQMPQKQL (160 aa)). 3168–3175 (VGPPGSGK) contributes to the ATP binding site. The 130-residue stretch at 3294–3423 (TTIYRFGPNI…FSRGDDLVVL (130 aa)) folds into the (+)RNA virus helicase C-terminal domain. Positions 3462-3559 (EGSCMPLPQV…LTLYIRGEPQ (98 aa)) constitute an AV-Nsp11N/CoV-Nsp15M domain. Positions 3561–3683 (LPETLVSTGR…MVWKGATAYF (123 aa)) constitute a NendoU domain. Residues histidine 3592, histidine 3607, and lysine 3636 contribute to the active site.

It belongs to the arteriviridae polyprotein family. As to quaternary structure, nsp1-alpha papain-like: Interacts with host RNF31. In terms of assembly, interacts with host EIF2AK2; this interaction occurs in host stress granules and leads to EIF2AK2 inhibition. Interacts with host G3BP1; this interaction probably plays a role in Nsp1-beta-mediated inhibition of host EIF2AK2. Interacts with host DDX18; this interaction redistributes host DDX18 to the cytoplasm. As to quaternary structure, interacts with host IFITM1. In terms of assembly, interacts with host DDX5. Interacts with host OTULIN. As to quaternary structure, interacts with host LGALS3. In terms of processing, specific enzymatic cleavages in vivo by its own proteases yield mature proteins. Nsp1 is autocleaved into two subunits, Nsp1-alpha and Nsp1-beta. There are two alternative pathways for processing. Either nsp4-5 is cleaved, which represents the major pathway or the nsp5-6 and nsp6-7 are processed, which represents the minor pathway. The major pathway occurs when nsp2 acts as a cofactor for nsp4.

The protein localises to the host nucleus. The protein resides in the host cytoplasm. It is found in the host membrane. It localises to the host endoplasmic reticulum. Its subcellular location is the host perinuclear region. It carries out the reaction RNA(n) + a ribonucleoside 5'-triphosphate = RNA(n+1) + diphosphate. The enzyme catalyses ATP + H2O = ADP + phosphate + H(+). It catalyses the reaction Thiol-dependent hydrolysis of ester, thioester, amide, peptide and isopeptide bonds formed by the C-terminal Gly of ubiquitin (a 76-residue protein attached to proteins as an intracellular targeting signal).. The catalysed reaction is uridylyl-uridylyl-ribonucleotide-RNA = a 3'-end uridylyl-2',3'-cyclophospho-uridine-RNA + a 5'-end dephospho-ribonucleoside-RNA. Contains the activities necessary for the transcription of negative stranded RNA, leader RNA, subgenomic mRNAs and progeny virion RNA as well as proteinases responsible for the cleavage of the polyprotein into functional products. In terms of biological role, inhibits host IFN-beta production. Plays a role in the degradation of the host transcriptional activator CREBBP protein. The degradation of host CREBBP which is a key component of the IFN enhanceosome is likely responsible for the inhibition of interferon mediated by Nsp1-alpha. Also participates in the inhibition of host NF-kappa-B activation by counteracting LUBAC-dependent induction of NF-kappa-B. Reduces host NEMO ubiquitination by blocking the interaction between the two LUBAC complex components RNF31 and SHARPIN. Its function is as follows. Plays a role in blocking host mRNA nuclear export to the cytoplasm and subversion of host protein synthesis. Additionally, inhibits the interferon-activated JAK/STAT signal transduction by mediating the ubiquitination and subsequent proteasomal degradation of host KPNA1. Repurposes the host antiviral stress granules into a proviral platform to counteract the EIF2AK2/PKR restriction, thereby regulating the host inflammatory response. Functionally, multifunctional protein that acts as a viral protease and as a viral antagonist of host immune response. Cleaves the nsp2/nsp3 site in the viral polyprotein. Displays deubiquitinating activity that cleaves both ubiquitinated and ISGylated products and therefore inhibits ubiquitin and ISG15-dependent host innate immunity. Also deubiquinates host NFKBIA, thereby interfering with NFKBIA degradation and impairing subsequent NF-kappa-B activation. Plays a role in the inhibition of the immune response by interacting with host IFITM1. This interaction leads to the proteasomal degradation of the IFN-induced antiviral protein IFITM1. In terms of biological role, cleaves the majority of cleavage sites present in the C-terminus of the polyprotein. Triggers host apoptosis through caspase-3, -8, and -9 activations. Subverts host innate immune responses through its protease activity. Targets the NF-kappa-B essential modulator NEMO and mediates its cleavage. Blocks host interferon beta induction and downstream signaling by cleaving mitochondrial MAVS, dislodging it from the mitochondria. Impairs host defense by cleaving host mRNA-decapping enzyme DCP1A to attenuate its antiviral activity. Its function is as follows. Plays a role in the initial induction of autophagosomes from host endoplasmic reticulum. Functionally, plays a role in the inhibition of host STAT3 signaling pathway by inducing the degradation of STAT3. Responsible for replication and transcription of the viral RNA genome. In terms of biological role, displays RNA and DNA duplex-unwinding activities with 5' to 3' polarity. Its function is as follows. Plays a role in viral transcription/replication and prevents the simultaneous activation of host cell dsRNA sensors, such as MDA5/IFIH1, OAS, PKR and NLRP3 inflammasome. Acts by degrading the 5'-polyuridines generated during replication of the poly(A) region of viral genomic and subgenomic RNAs. Catalyzes a two-step reaction in which a 2'3'-cyclic phosphate (2'3'-cP) is first generated by 2'-O transesterification, which is then hydrolyzed to a 3'-phosphate (3'-P). If not degraded, poly(U) RNA would hybridize with poly(A) RNA tails and activate host dsRNA sensors. Also plays a role in the inhibition of host type I interferon production by recruiting host OTULIN to promote removal of linear ubiquitination targeting host NEMO. The polypeptide is Replicase polyprotein 1ab (Sus scrofa (Pig)).